The sequence spans 556 residues: Testis-specific protein 10-interacting protein (556 aa).

Residues 1-16 (MGQDTDMLNTYQQLVR) show a composition bias toward polar residues. Disordered stretches follow at residues 1-31 (MGQD…LQAP), 50-102 (GCLG…LLPR), 123-155 (LQPS…ANLP), and 179-309 (GGVS…QWRK). Polar residues predominate over residues 208 to 219 (GSASDKQVQLQS). Residues 244-258 (SEEEQFSEATEEAEE) show a composition bias toward acidic residues. Positions 289–301 (QGQSQGSSPSFNN) are enriched in polar residues. A coiled-coil region spans residues 379–464 (RQEATRSLLQ…LQGIQHRVQA (86 aa)). The interval 503–556 (AGKVDREGTPRKPRSHRSMGVRMEHSPQRPPRTEPTGSQPDRHYNPSLDPECSP) is disordered.

This is Testis-specific protein 10-interacting protein (TSGA10IP) from Homo sapiens (Human).